A 439-amino-acid polypeptide reads, in one-letter code: Protease Do-like 1, chloroplastic (439 aa).

Residues 154 to 323 (QGSGSGFVWD…IPVDTVGGIV (170 aa)) form a serine protease region. Catalysis depends on charge relay system residues His-173, Asp-203, and Ser-282. Positions 326–423 (LVRFGKVTRP…EVTVEVLRGD (98 aa)) constitute a PDZ domain.

The protein belongs to the peptidase S1C family. As to quaternary structure, interacts with PTAC16 and other potential targets for degradation under high light conditions.

The protein localises to the plastid. It localises to the chloroplast thylakoid membrane. With respect to regulation, inhibited by phenylmethylsulfonyl fluoride and O-phenanthroline. Serine protease that is required at high temperature. May be involved in the degradation of damaged proteins. In vivo, can degrade beta-casein. The sequence is that of Protease Do-like 1, chloroplastic (DEGP1) from Arabidopsis thaliana (Mouse-ear cress).